We begin with the raw amino-acid sequence, 446 residues long: MSKRPGDLACDLERSLPALASLGTSLSHSQSLSSHFIPPPLEKRRAISDVRRTFCLFVTFDLLFISLLWIIELNTNTGIRKNLEQEVIHYSFQSSFFDIFVLAFFRFSGLLLGYAVLRLQHWWVIAVTTLVSSAFLIVKVILSELLSKGAFGYLLPIVSFVLAWLETWFLDFKVLPQEAEEERWYLAAQAAVARGPLLFSGALSEGQFYSPPESFAGSDNESDEEVTGKKSFSAQEREYIRQGKEATAVVDQILAQEENWKFERSNEYGDTVYTIEVPFHGKTFILKTFLPCPAELVYQEVILQPERMVLWNKTVTACQILQRVEDNTLVSYDVSSGAAGGVVSPRDFVNVRRIERRRDRYLSSGIATTHCSKPPTHKYVRGENGPGGFIVLKSANNPRVCTFVWILNTDLKGRLPRYLIHQSLGATMFEFAFHLRQRVGELGARA.

The Cytoplasmic segment spans residues 1-52 (MSKRPGDLACDLERSLPALASLGTSLSHSQSLSSHFIPPPLEKRRAISDVRR). The 172-residue stretch at 47 to 218 (ISDVRRTFCL…YSPPESFAGS (172 aa)) folds into the MENTAL domain. A helical membrane pass occupies residues 53–73 (TFCLFVTFDLLFISLLWIIEL). Residues 74–95 (NTNTGIRKNLEQEVIHYSFQSS) are Extracellular-facing. A helical membrane pass occupies residues 96-116 (FFDIFVLAFFRFSGLLLGYAV). Residues 117–121 (LRLQH) are Cytoplasmic-facing. The chain crosses the membrane as a helical span at residues 122-142 (WWVIAVTTLVSSAFLIVKVIL). The Extracellular segment spans residues 143–149 (SELLSKG). The chain crosses the membrane as a helical span at residues 150-170 (AFGYLLPIVSFVLAWLETWFL). Residues 171 to 446 (DFKVLPQEAE…QRVGELGARA (276 aa)) are Cytoplasmic-facing. Positions 207–213 (QFYSPPE) match the FFAT motif. S210, S218, and S222 each carry phosphoserine. One can recognise an START domain in the interval 231-444 (SFSAQEREYI…LRQRVGELGA (214 aa)).

The protein belongs to the STARD3 family. In terms of assembly, homodimer. Interacts (via the MENTAL domain) with STARD3NL. Interacts (via phosphorylated FFAT motif) with VAPA (via MSP domain). Interacts (via phosphorylated FFAT motif) with VAPB (via MSP domain). Interacts (via phosphorylated FFAT motif) with MOSPD2 (via MSP domain); this interaction allows enrichment of MOSPD2 around endosomes. In terms of processing, phosphorylation at Ser-210 is necessary and sufficient for the direct interaction of the phosphorylated FFAT motif with the MSP domain of MOSPD2, VAPA and VAPB and allows the tethering of two membranes that participates in the formation of ER-endosome contacts. Phosphorylation of the FFAT motif leads to conformation changes. Additional phosphorylations around the core FFAT motif (QFYSPPE) are not essential but strengthen the interaction with MOSPD2, VAPA and VAPB. Phosphorylation at Ser-210 of FFAT motif drives membrane tethering between the endoplasmic reticulum and late endosomes via interaction with VAPA and VAPB that in turn allows the efficient transport of sterol mediated by the START domain.

Its subcellular location is the late endosome membrane. It catalyses the reaction cholesterol(in) = cholesterol(out). In terms of biological role, sterol-binding protein that mediates cholesterol transport from the endoplasmic reticulum to endosomes. The sterol transport mechanism is triggered by phosphorylation of FFAT motif that leads to membrane tethering between the endoplasmic reticulum and late endosomes via interaction with VAPA and VAPB. Acts as a lipid transfer protein that redirects sterol to the endosome at the expense of the cell membrane and favors membrane formation inside endosomes. May also mediate cholesterol transport between other membranes, such as mitochondria membrane or cell membrane. However, such results need additional experimental evidences; probably mainly mediates cholesterol transport from the endoplasmic reticulum to endosomes. Does not activate transcriptional cholesterol sensing. Able to bind other lipids, such as lutein, a xanthophyll carotenoids that form the macular pigment of the retina. The polypeptide is StAR-related lipid transfer protein 3 (Mus musculus (Mouse)).